The sequence spans 1073 residues: Probable inorganic carbon transporter subunit DabA 2 (1073 aa).

Over residues 1-20 (MSSGNTSSQNHSPVNNQPTR) the composition is skewed to polar residues. The disordered stretch occupies residues 1–35 (MSSGNTSSQNHSPVNNQPTRLKSPLPALHKDTQPN). Residues Cys-535, Asp-537, His-721, and Cys-736 each coordinate Zn(2+).

Belongs to the inorganic carbon transporter (TC 9.A.2) DabA family. Forms a complex with DabB. The cofactor is Zn(2+).

Its subcellular location is the cell inner membrane. Functionally, part of an energy-coupled inorganic carbon pump. The sequence is that of Probable inorganic carbon transporter subunit DabA 2 from Rhodopirellula baltica (strain DSM 10527 / NCIMB 13988 / SH1).